A 521-amino-acid chain; its full sequence is MIDEILPKLVQYWYIVLPTLLIIKHVVSYINTQRLMRKFRAKPVTNVLNDGFFGIPNGIKAIKEKNKGRAQEYNDEKFAAGPKPKVGTYLFKLFTKDVLVTKDPENIKAILATQFEDFSLGKRLDFFKPLLGYGIFTLDGEGWKHSRAMLRPQFAREQVGHVKLIEPHFQSLKKHIIKNKGQFFDIQELFFRFTVDSATEFLFGESVESLKDESIGYDQQDFDFDGRKNFAEAFNKAQEYLGTRAILQLFYWLVNGADFKKSVAEVHKFTDYYVQKALDATPEELEKHSGYIFLYELVQQTRDPKVLRDQSLNILLAGRDTTAGLLSFALFELARNPEVWSRLREEIGDKFGLDEDATIEGISFESLKQCEYLKAVVNECLRMYPSVPRNFRIATKHTTLPRGGGPDGKDPIFIKKGAVVSYGINSTHLDPMYYGPDARLFNPDRWSKPETKKLGWAFLPFNGGPRICLGQQFALTEASYVLVRMIQNFKELELTPNTVYPPRRLTNLTMSLYDGAYIKVN.

Position 468 (Cys468) interacts with heme.

It belongs to the cytochrome P450 family. Requires heme as cofactor.

Its subcellular location is the membrane. Its function is as follows. Together with an NADPH cytochrome P450 the enzyme system catalyzes the terminal hydroxylation as the first step in the assimilation of alkanes and fatty acids. In Candida maltosa (Yeast), this protein is Cytochrome P450 52A9 (CYP52A9).